We begin with the raw amino-acid sequence, 296 residues long: Fructose-bisphosphate aldolase class 1 (296 aa).

Residue Glu175 is the Proton acceptor of the active site. Lys212 acts as the Schiff-base intermediate with dihydroxyacetone-P in catalysis.

Belongs to the class I fructose-bisphosphate aldolase family.

It carries out the reaction beta-D-fructose 1,6-bisphosphate = D-glyceraldehyde 3-phosphate + dihydroxyacetone phosphate. It participates in carbohydrate degradation; glycolysis; D-glyceraldehyde 3-phosphate and glycerone phosphate from D-glucose: step 4/4. The chain is Fructose-bisphosphate aldolase class 1 from Staphylococcus haemolyticus (strain JCSC1435).